Reading from the N-terminus, the 304-residue chain is Recombination-associated protein RdgC (304 aa).

This sequence belongs to the RdgC family.

The protein resides in the cytoplasm. It is found in the nucleoid. Its function is as follows. May be involved in recombination. This is Recombination-associated protein RdgC from Shewanella putrefaciens (strain CN-32 / ATCC BAA-453).